A 157-amino-acid polypeptide reads, in one-letter code: MNYSITTLGKKTIAGFHLVGPWDQTVKQGVEQLMMWVENHQVPAREWLAVYYDNPEEVPAEKLRCATVVAVDEDYVIPANSEGVILAAVAGGDYACARARVVDYDFATPWMQFFDSLLQSTTYRVAPRPCFEIYLNDGNHDGYWDIDMYVPVERVAS.

Belongs to the DNA gyrase inhibitor family. Interacts with DNA gyrase.

The protein localises to the cytoplasm. Inhibits the supercoiling activity of DNA gyrase. Acts by inhibiting DNA gyrase at an early step, prior to (or at the step of) binding of DNA by the gyrase. It protects cells against toxins that target DNA gyrase, by inhibiting activity of these toxins and reducing the formation of lethal double-strand breaks in the cell. The chain is DNA gyrase inhibitor from Klebsiella pneumoniae (strain 342).